We begin with the raw amino-acid sequence, 519 residues long: Major facilitator superfamily domain-containing protein 8 (519 aa).

Residues 1–25 form a disordered region; the sequence is MANLGSEAEREPLLGPGSPGSREWS. Over 1–41 the chain is Cytoplasmic; that stretch reads MANLGSEAEREPLLGPGSPGSREWSEIETQEHYKSRWKSVR. Positions 13-14 match the Dileucine internalization motif motif; the sequence is LL. Residues 42–62 traverse the membrane as a helical segment; the sequence is ILYLTMFLSSVGFSIVIMSIW. Residues 63-75 are Extracellular-facing; it reads PYLQKIDQTADAS. A helical transmembrane segment spans residues 76–96; that stretch reads FLGWVIASYSLGQMVASPLFG. Residues 97 to 106 lie on the Cytoplasmic side of the membrane; it reads LWSNYRPRKE. Residues 107–127 traverse the membrane as a helical segment; sequence PLIVSISISVAANCLYAYVHV. The Extracellular segment spans residues 128–140; that stretch reads PAAHNKYYMLIAR. Residues 141–161 form a helical membrane-spanning segment; the sequence is GLVGFGAGNVAVVRSYIAGAT. The Cytoplasmic segment spans residues 162–174; sequence SLQERTNAMANTS. Residues 175-195 traverse the membrane as a helical segment; it reads TCQALGFILGPVFQTCFALIG. Residues 196–212 lie on the Extracellular side of the membrane; it reads EKGVTWDIIKLQVNMYT. Residues 213 to 233 form a helical membrane-spanning segment; that stretch reads APVLLAAFLGILNIILILFIL. The Cytoplasmic portion of the chain corresponds to 234–267; that stretch reads REHRVDDLGRQCKSVNFQEENTDEPQIPEGSIDQ. The chain crosses the membrane as a helical span at residues 268 to 288; that stretch reads VAVVATNIVFFVVLFIFAVYE. Over 289–310 the chain is Extracellular; the sequence is TILTPLTLDMYAWTQEQAVLYD. Residues 311–331 form a helical membrane-spanning segment; the sequence is GILLVAFGVEAVLVFMGVKLL. Over 332–338 the chain is Cytoplasmic; sequence SKKIGER. The helical transmembrane segment at 339-359 threads the bilayer; sequence AILLGGFVVVWVGFFILLPWG. Residues 360–416 lie on the Extracellular side of the membrane; that stretch reads NQFPKIQWEDLHNSSTPNTTFGEIIIGLWNSSREDHSEQPTGCPIEQTWCLYTPVIH. Residues Asn372 and Asn377 are each glycosylated (N-linked (GlcNAc...) asparagine). A helical transmembrane segment spans residues 417–439; it reads LAQFLTAAVLIGTGYPACSVMSY. Over 440 to 452 the chain is Cytoplasmic; it reads TLYSKVLGPKPQG. The chain crosses the membrane as a helical span at residues 453–473; it reads IYMGWLTTSGSAARILGPVFI. At 474 to 483 the chain is on the extracellular side; the sequence is SHVYTYLGPR. The chain crosses the membrane as a helical span at residues 484-504; sequence WAFSLVCGIVVLTILLIGAVY. Over 505–519 the chain is Cytoplasmic; it reads KRLVAFSVRYMRIQE.

Belongs to the major facilitator superfamily.

The protein localises to the endosome membrane. The protein resides in the lysosome membrane. The catalysed reaction is chloride(in) = chloride(out). It catalyses the reaction iodide(out) = iodide(in). The enzyme catalyses fluoride(in) = fluoride(out). Its function is as follows. Outward-rectifying chloride channel involved in endolysosomal chloride homeostasis, membrane fusion and function. Conducts chloride currents up to hundreds of picoamperes. Regulates lysosomal calcium content by reducing the lysosomal membrane potential, thereby activating TRPML1 channel and further release of lysosomal calcium ions. Regulates the pH in endolysosomal compartments and may contribute to progressive acidification from endosome to lysosome. Permeable to other halides such as iodide and fluoride ions. This Mus musculus (Mouse) protein is Major facilitator superfamily domain-containing protein 8.